The chain runs to 632 residues: tRNA uridine 5-carboxymethylaminomethyl modification enzyme MnmG (632 aa).

13 to 18 contributes to the FAD binding site; sequence GGGHAG. 273 to 287 is an NAD(+) binding site; it reads GPRYCPSIEDKIHRF.

Belongs to the MnmG family. Homodimer. Heterotetramer of two MnmE and two MnmG subunits. It depends on FAD as a cofactor.

It localises to the cytoplasm. NAD-binding protein involved in the addition of a carboxymethylaminomethyl (cmnm) group at the wobble position (U34) of certain tRNAs, forming tRNA-cmnm(5)s(2)U34. The polypeptide is tRNA uridine 5-carboxymethylaminomethyl modification enzyme MnmG (Psychrobacter arcticus (strain DSM 17307 / VKM B-2377 / 273-4)).